The sequence spans 168 residues: Photosystem I assembly protein Ycf3 (168 aa).

3 TPR repeats span residues 35–68 (AFTY…EIDP), 72–105 (SYIL…NPFL), and 120–153 (GEQA…TPGN).

This sequence belongs to the Ycf3 family.

The protein localises to the plastid. It is found in the chloroplast thylakoid membrane. Essential for the assembly of the photosystem I (PSI) complex. May act as a chaperone-like factor to guide the assembly of the PSI subunits. This chain is Photosystem I assembly protein Ycf3, found in Amborella trichopoda.